The sequence spans 54 residues: Sperm protamine P3 (54 aa).

A disordered region spans residues 1–54 (RRRRRRGKGKGGKKKKGKKRRRRGRKGKGKGKKKGKRKGKRGGKRRRRRRKGKK).

As to expression, gonads.

The protein resides in the nucleus. It is found in the chromosome. Functionally, protamines substitute for histones in the chromatin of sperm during the haploid phase of spermatogenesis. They compact sperm DNA into a highly condensed, stable and inactive complex. This chain is Sperm protamine P3, found in Bolinus brandaris (Purple dye murex).